A 607-amino-acid chain; its full sequence is Rap1 GTPase-GDP dissociation stimulator 1-B (607 aa).

ARM repeat units lie at residues 79-118 (ELMR…NICY), 170-211 (DSLQ…NLAE), 347-390 (DGNC…NLAI), 391-431 (PVVN…MLID), and 479-519 (SKDV…LIAA).

Interacts with ralB. Probably interacts with the post-translationally isoprenylated (geranyl-geranylation) forms of ral proteins. Interacts with both GDP-bound and GTP-bound forms of ralA, but interaction is much stronger with ralA-GDP.

Its subcellular location is the cytoplasm. The protein resides in the cytosol. It localises to the endoplasmic reticulum. It is found in the mitochondrion. Stimulates GDP/GTP exchange reaction of a group of small GTP-binding proteins (G proteins) including Rap1a/Rap1b, RhoA, RhoB and KRas, by stimulating the dissociation of GDP from and the subsequent binding of GTP to each small G protein. This is Rap1 GTPase-GDP dissociation stimulator 1-B (rap1gds1-b) from Xenopus laevis (African clawed frog).